Consider the following 478-residue polypeptide: UDP-N-acetylmuramate--L-alanine ligase (478 aa).

Residue glycine 126–threonine 132 coordinates ATP.

Belongs to the MurCDEF family.

The protein resides in the cytoplasm. It catalyses the reaction UDP-N-acetyl-alpha-D-muramate + L-alanine + ATP = UDP-N-acetyl-alpha-D-muramoyl-L-alanine + ADP + phosphate + H(+). It functions in the pathway cell wall biogenesis; peptidoglycan biosynthesis. In terms of biological role, cell wall formation. The protein is UDP-N-acetylmuramate--L-alanine ligase of Synechococcus sp. (strain JA-2-3B'a(2-13)) (Cyanobacteria bacterium Yellowstone B-Prime).